A 149-amino-acid chain; its full sequence is Transcriptional repressor NrdR (149 aa).

A zinc finger lies at 3 to 34; it reads CPFCSTEETKVIDSRLVSEGYQVRRRRECGNC. The ATP-cone domain occupies 49–139; the sequence is PKVIKNDGTR…VYLSFDDINQ (91 aa).

The protein belongs to the NrdR family. It depends on Zn(2+) as a cofactor.

Negatively regulates transcription of bacterial ribonucleotide reductase nrd genes and operons by binding to NrdR-boxes. The sequence is that of Transcriptional repressor NrdR from Pasteurella multocida (strain Pm70).